The following is a 382-amino-acid chain: Intermediate transcription factor 3 large subunit (382 aa).

This sequence belongs to the poxviruses A23 family. In terms of assembly, heterodimer of a 45 kDa and a 32 kDa subunit.

Functionally, acts with RNA polymerase to initiate transcription from intermediate gene promoters. This chain is Intermediate transcription factor 3 large subunit (VITF3L), found in Oryctolagus cuniculus (Rabbit).